A 310-amino-acid chain; its full sequence is Cytosolic Fe-S cluster assembly factor Nubp1 homolog (310 aa).

[4Fe-4S] cluster contacts are provided by Cys8, Cys22, Cys25, and Cys31. 62-69 provides a ligand contact to ATP; sequence GKGGVGKS. 2 residues coordinate [4Fe-4S] cluster: Cys239 and Cys242.

This sequence belongs to the Mrp/NBP35 ATP-binding proteins family. NUBP1/NBP35 subfamily. In terms of assembly, heterotetramer of 2 Nubp1 and 2 Nubp2 chains. [4Fe-4S] cluster serves as cofactor.

The protein resides in the cytoplasm. Its function is as follows. Component of the cytosolic iron-sulfur (Fe/S) protein assembly (CIA) machinery. Required for maturation of extramitochondrial Fe-S proteins. The Nubp1-Nubp2 heterotetramer forms a Fe-S scaffold complex, mediating the de novo assembly of an Fe-S cluster and its transfer to target apoproteins. In Drosophila willistoni (Fruit fly), this protein is Cytosolic Fe-S cluster assembly factor Nubp1 homolog.